A 162-amino-acid chain; its full sequence is Peptidyl-prolyl cis-trans isomerase (162 aa).

Ser2 carries the N-acetylserine modification. The PPIase cyclophilin-type domain occupies 5-161; sequence YFDVEADGQP…ARIVVAKSGE (157 aa). Residues Lys29 and Lys42 each participate in a glycyl lysine isopeptide (Lys-Gly) (interchain with G-Cter in ubiquitin) cross-link. Thr71 is modified (phosphothreonine). Glycyl lysine isopeptide (Lys-Gly) (interchain with G-Cter in ubiquitin) cross-links involve residues Lys123 and Lys139. A phosphoserine mark is found at Ser142 and Ser145. Glycyl lysine isopeptide (Lys-Gly) (interchain with G-Cter in ubiquitin) cross-links involve residues Lys151 and Lys158.

This sequence belongs to the cyclophilin-type PPIase family. PPIase A subfamily. Interacts with a complex composed of SIN3 and RPD3. Identified in the Set3C complex with HOS2, HST1, SNT1, SIF2, HOS4/YIL112W and SET3.

The protein localises to the cytoplasm. It localises to the nucleus. Its subcellular location is the mitochondrion intermembrane space. It catalyses the reaction [protein]-peptidylproline (omega=180) = [protein]-peptidylproline (omega=0). Its activity is regulated as follows. Binds cyclosporin A (CsA). CsA mediates some of its effects via an inhibitory action on PPIase. Its function is as follows. PPIases accelerate the folding of proteins. It catalyzes the cis-trans isomerization of proline imidic peptide bonds in oligopeptides. Involved in histone deacetylase complexes, suggesting a function in chromatin. Imports fructose-1,6-bisphosphatase (FBPase) into the intermediate vacuole import and degradation (Vid) vesicles. Regulates the meiotic gene program via the Set3C histone deacetylase complex to promote efficient sporulation, and the prolyl-isomerase activity is required for this function. This chain is Peptidyl-prolyl cis-trans isomerase (CPR1), found in Saccharomyces cerevisiae (strain ATCC 204508 / S288c) (Baker's yeast).